Here is a 572-residue protein sequence, read N- to C-terminus: DNA polymerase (572 aa).

Residues 1–222 form a 3'-5' exonuclease and strand displacement activities region; it reads MSRKMFSCDF…LPMDKEIRKA (222 aa). Positions 56 to 66 are interaction with the primer terminal protein; it reads YFHNLKFDGAF. Residues aspartate 142 and aspartate 166 each contribute to the Mg(2+) site. Residues 223–226 are DNA-binding; Involved in the formation of a stable complex between TP and phi29 DNA polymerase; the sequence is YRGG. The segment at 227 to 572 is initiation, polymerization and pyrophosphorolytic activities; sequence FTWLNDKYKE…VLVDSVFTIK (346 aa). The Mg(2+) site is built by aspartate 246 and valine 247. 5-methyl-UTP contacts are provided by tyrosine 251, lysine 368, and lysine 380. Mg(2+) is bound by residues aspartate 453 and aspartate 455. Aspartate 455 lines the 5-methyl-UTP pocket.

It belongs to the DNA polymerase type-B family. In terms of assembly, interacts with the primer terminal protein; this interaction allows the initiation of TP-primed DNA replication at both viral DNA ends. Interacts with DNA. Mg(2+) is required as a cofactor.

It catalyses the reaction DNA(n) + a 2'-deoxyribonucleoside 5'-triphosphate = DNA(n+1) + diphosphate. Polymerase responsible for protein-primed viral DNA replication by strand displacement with high processivity and fidelity. To start replication, the DNA polymerase forms a heterodimer with a free primer terminal protein (TP), recognizes the replication origins at both 5' ends of the linear chromosome, and initiates replication using as primer the OH-group of Ser-232 of the TP. This polymerase possesses three enzymatic activities: DNA synthesis (polymerase), primer terminal protein (TP) deoxynucleotidylation, which is the formation of a covalent linkage (phosphoester) between the hydroxyl group of a specific serine residue in TP and 5'-dAMP, a reaction directed by the third T at the 3' end, and 3' to 5' exonuclease activity. Exonuclease activity has a proofreading purpose. Since the polymerase initiates the replication on the third thymine, the TP-dAMP initiation product translocates backwards to recover the template information of the 2 terminal nucleotide (sliding back-mechanism). The protein is DNA polymerase of Bacillus phage Nf (Bacteriophage Nf).